The primary structure comprises 138 residues: Small ribosomal subunit protein uS8 (138 aa).

This sequence belongs to the universal ribosomal protein uS8 family. In terms of assembly, part of the 30S ribosomal subunit. Contacts proteins S5 and S12.

Functionally, one of the primary rRNA binding proteins, it binds directly to 16S rRNA central domain where it helps coordinate assembly of the platform of the 30S subunit. This chain is Small ribosomal subunit protein uS8 (rpsH), found in Thermus thermophilus (strain ATCC BAA-163 / DSM 7039 / HB27).